The chain runs to 159 residues: Cyclic pyranopterin monophosphate synthase (159 aa).

Residues 75-77 and 113-114 each bind substrate; these read LCH and ME. Residue Asp128 is part of the active site.

The protein belongs to the MoaC family. In terms of assembly, homohexamer; trimer of dimers.

The enzyme catalyses (8S)-3',8-cyclo-7,8-dihydroguanosine 5'-triphosphate = cyclic pyranopterin phosphate + diphosphate. It participates in cofactor biosynthesis; molybdopterin biosynthesis. Functionally, catalyzes the conversion of (8S)-3',8-cyclo-7,8-dihydroguanosine 5'-triphosphate to cyclic pyranopterin monophosphate (cPMP). This chain is Cyclic pyranopterin monophosphate synthase, found in Aliivibrio salmonicida (strain LFI1238) (Vibrio salmonicida (strain LFI1238)).